The following is a 154-amino-acid chain: Prefoldin subunit 2 (154 aa).

A compositionally biased stretch (basic and acidic residues) spans 124–139 (IRLMGEDEKPAAKENS). The interval 124–154 (IRLMGEDEKPAAKENSEGAGAKASSAGVLVS) is disordered. Low complexity predominate over residues 140-154 (EGAGAKASSAGVLVS).

The protein belongs to the prefoldin subunit beta family. In terms of assembly, heterohexamer of two PFD-alpha type and four PFD-beta type subunits. Component of the PAQosome complex which is responsible for the biogenesis of several protein complexes and which consists of R2TP complex members RUVBL1, RUVBL2, RPAP3 and PIH1D1, URI complex members PFDN2, PFDN6, PDRG1, UXT and URI1 as well as ASDURF, POLR2E and DNAAF10/WDR92. Interacts with URI1; the interaction is phosphorylation-dependent and occurs in a growth-dependent manner.

Its subcellular location is the nucleus. It is found in the cytoplasm. The protein resides in the mitochondrion. Binds specifically to cytosolic chaperonin (c-CPN) and transfers target proteins to it. Binds to nascent polypeptide chain and promotes folding in an environment in which there are many competing pathways for nonnative proteins. The chain is Prefoldin subunit 2 (PFDN2) from Homo sapiens (Human).